Here is a 241-residue protein sequence, read N- to C-terminus: Methylthioribulose-1-phosphate dehydratase (241 aa).

Cys-102 provides a ligand contact to substrate. Residues His-120, His-122, and His-199 each coordinate Zn(2+).

The protein belongs to the aldolase class II family. MtnB subfamily. The cofactor is Zn(2+).

The protein resides in the cytoplasm. It catalyses the reaction 5-(methylsulfanyl)-D-ribulose 1-phosphate = 5-methylsulfanyl-2,3-dioxopentyl phosphate + H2O. It participates in amino-acid biosynthesis; L-methionine biosynthesis via salvage pathway; L-methionine from S-methyl-5-thio-alpha-D-ribose 1-phosphate: step 2/6. Its function is as follows. Catalyzes the dehydration of methylthioribulose-1-phosphate (MTRu-1-P) into 2,3-diketo-5-methylthiopentyl-1-phosphate (DK-MTP-1-P). This Coprinopsis cinerea (strain Okayama-7 / 130 / ATCC MYA-4618 / FGSC 9003) (Inky cap fungus) protein is Methylthioribulose-1-phosphate dehydratase.